The chain runs to 39 residues: Photosystem II reaction center protein J (39 aa).

A helical membrane pass occupies residues 7–27; it reads IPLWVVAVIAGLGVIAVVGLF.

This sequence belongs to the PsbJ family. PSII is composed of 1 copy each of membrane proteins PsbA, PsbB, PsbC, PsbD, PsbE, PsbF, PsbH, PsbI, PsbJ, PsbK, PsbL, PsbM, PsbT, PsbX, PsbY, PsbZ, Psb30/Ycf12, peripheral proteins PsbO, CyanoQ (PsbQ), PsbU, PsbV and a large number of cofactors. It forms dimeric complexes.

It localises to the cellular thylakoid membrane. Its function is as follows. One of the components of the core complex of photosystem II (PSII). PSII is a light-driven water:plastoquinone oxidoreductase that uses light energy to abstract electrons from H(2)O, generating O(2) and a proton gradient subsequently used for ATP formation. It consists of a core antenna complex that captures photons, and an electron transfer chain that converts photonic excitation into a charge separation. The sequence is that of Photosystem II reaction center protein J from Gloeothece citriformis (strain PCC 7424) (Cyanothece sp. (strain PCC 7424)).